The chain runs to 270 residues: uncharacterized protein (270 aa).

In terms of domain architecture, HTH lysR-type spans 1–50; it reads LTEVVKAQSFTKAAENLYTSQPSISRDIKRLENDYDVKVFEFKHSKMTLT. Residues 10–29 constitute a DNA-binding region (H-T-H motif); it reads FTKAAENLYTSQPSISRDIK.

Belongs to the LysR transcriptional regulatory family.

This is an uncharacterized protein from Staphylococcus xylosus.